Here is a 256-residue protein sequence, read N- to C-terminus: MVGPARPQIVLFGSSIVQMSFGHGGWGAILSEVYARKADIILRGYYGWNSSRALEVVDQVFPKDAAVQPSLVIVYFGGNDSMAPHSSGLGPHVPLTEYVDNMKKIALHLQSLSDFTRIIFLSSPPVDEAKVRQNQSPYLSEVIRTNDLCKTYSDACVELCQELGLEVVDLFSTFQKADDWKTVCFTDGIHLSAQGSKIVAGEILRVVKEAEWHPSLHWKSMPTEFADDSPYDLVSADGKQTVNSSEWTYFWEEQWD.

Residues 1–27 (MVGPARPQIVLFGSSIVQMSFGHGGWG) form the signal peptide. Catalysis depends on serine 15, which acts as the Nucleophile. Residues asparagine 49 and asparagine 79 are each glycosylated (N-linked (GlcNAc...) asparagine). The active site involves histidine 213. An N-linked (GlcNAc...) asparagine glycan is attached at asparagine 243.

This sequence belongs to the 'GDSL' lipolytic enzyme family. In terms of tissue distribution, specifically expressed in anthers (stages 8-12).

It is found in the secreted. In Arabidopsis thaliana (Mouse-ear cress), this protein is GDSL esterase/lipase CPRD49 (CPRD49).